The primary structure comprises 212 residues: Ribonuclease HII (212 aa).

The 185-residue stretch at 28–212 (SLIAGIDEVG…KSFAPVRQVF (185 aa)) folds into the RNase H type-2 domain. The a divalent metal cation site is built by Asp-34, Glu-35, and Asp-127.

Belongs to the RNase HII family. The cofactor is Mn(2+). Mg(2+) is required as a cofactor.

It is found in the cytoplasm. The enzyme catalyses Endonucleolytic cleavage to 5'-phosphomonoester.. In terms of biological role, endonuclease that specifically degrades the RNA of RNA-DNA hybrids. This Chlamydia abortus (strain DSM 27085 / S26/3) (Chlamydophila abortus) protein is Ribonuclease HII.